The chain runs to 479 residues: Lincomycin resistance protein LmrB (479 aa).

Helical transmembrane passes span 19–41 (MISL…IALT), 56–78 (WLTT…LLQW), 85–107 (FTVS…SFSF), 112–134 (RIVQ…LVIF), 141–160 (AAMG…GPTF), 170–192 (WHWI…IAYM), 205–222 (VLSI…VFGF), 232–251 (WSSP…LILF), 272–294 (MFIL…MLLL), 304–326 (LTAF…MSPV), 338–355 (WLVI…WFFS), 360–382 (TSTA…MIMM), 403–425 (IMNT…IMAA), and 449–471 (AGVQ…GAFF).

Belongs to the major facilitator superfamily. EmrB family.

It is found in the cell membrane. Proton-dependent transporter. May mediate the efflux of lincomycin. This is Lincomycin resistance protein LmrB (lmrB) from Bacillus subtilis (strain 168).